A 767-amino-acid polypeptide reads, in one-letter code: Probable beta-glucosidase K (767 aa).

A glycan (N-linked (GlcNAc...) asparagine) is linked at asparagine 19. Aspartate 232 is a catalytic residue. 3 N-linked (GlcNAc...) asparagine glycosylation sites follow: asparagine 324, asparagine 477, and asparagine 749. The 148-residue stretch at 405–552 (EGQPGLRMRF…DPERAIARAV (148 aa)) folds into the PA14 domain. The interval 727–767 (LGRRGRSGSSPAVYRGRSNNVVNRTSHQGAQRISKGGFAAR) is disordered. Polar residues predominate over residues 743–757 (RSNNVVNRTSHQGAQ).

Belongs to the glycosyl hydrolase 3 family.

The protein localises to the secreted. The catalysed reaction is Hydrolysis of terminal, non-reducing beta-D-glucosyl residues with release of beta-D-glucose.. The protein operates within glycan metabolism; cellulose degradation. Beta-glucosidases are one of a number of cellulolytic enzymes involved in the degradation of cellulosic biomass. Catalyzes the last step releasing glucose from the inhibitory cellobiose. In Aspergillus fumigatus (strain ATCC MYA-4609 / CBS 101355 / FGSC A1100 / Af293) (Neosartorya fumigata), this protein is Probable beta-glucosidase K (bglK).